Reading from the N-terminus, the 92-residue chain is Large ribosomal subunit protein eL34 (92 aa).

The protein belongs to the eukaryotic ribosomal protein eL34 family.

This Staphylothermus marinus (strain ATCC 43588 / DSM 3639 / JCM 9404 / F1) protein is Large ribosomal subunit protein eL34.